The following is a 559-amino-acid chain: 2-succinyl-5-enolpyruvyl-6-hydroxy-3-cyclohexene-1-carboxylate synthase (559 aa).

It belongs to the TPP enzyme family. MenD subfamily. As to quaternary structure, homodimer. It depends on Mg(2+) as a cofactor. The cofactor is Mn(2+). Requires thiamine diphosphate as cofactor.

It carries out the reaction isochorismate + 2-oxoglutarate + H(+) = 5-enolpyruvoyl-6-hydroxy-2-succinyl-cyclohex-3-ene-1-carboxylate + CO2. It functions in the pathway quinol/quinone metabolism; 1,4-dihydroxy-2-naphthoate biosynthesis; 1,4-dihydroxy-2-naphthoate from chorismate: step 2/7. The protein operates within quinol/quinone metabolism; menaquinone biosynthesis. Its function is as follows. Catalyzes the thiamine diphosphate-dependent decarboxylation of 2-oxoglutarate and the subsequent addition of the resulting succinic semialdehyde-thiamine pyrophosphate anion to isochorismate to yield 2-succinyl-5-enolpyruvyl-6-hydroxy-3-cyclohexene-1-carboxylate (SEPHCHC). The chain is 2-succinyl-5-enolpyruvyl-6-hydroxy-3-cyclohexene-1-carboxylate synthase from Cytophaga hutchinsonii (strain ATCC 33406 / DSM 1761 / CIP 103989 / NBRC 15051 / NCIMB 9469 / D465).